The sequence spans 327 residues: Expansin-B7 (327 aa).

Positions 1–30 (MAGRSRRRSFWSVGVAAALLCLLAAHGCSA) are cleaved as a signal peptide. Residues 30–88 (AKHHKPKPTPGGISGNASSSSSNSSTPSIPPPVAPTPTAPTPPIPSPGTGSSNGSSGGG) form a disordered region. Residues 44-56 (GNASSSSSNSSTP) are compositionally biased toward low complexity. Asn45 and Asn52 each carry an N-linked (GlcNAc...) asparagine glycan. The segment covering 57–75 (SIPPPVAPTPTAPTPPIPS) has biased composition (pro residues). Asn82 carries an N-linked (GlcNAc...) asparagine glycan. The region spanning 112 to 218 (GGACGFKNVN…RRVPCQYPGL (107 aa)) is the Expansin-like EG45 domain. Cystine bridges form between Cys115-Cys143, Cys146-Cys213, and Cys151-Cys157. Residues 231 to 322 (VYMAILVEYE…DWQPNTVYSS (92 aa)) enclose the Expansin-like CBD domain. Residue Asn298 is glycosylated (N-linked (GlcNAc...) asparagine).

Belongs to the expansin family. Expansin B subfamily.

Its subcellular location is the secreted. It is found in the cell wall. The protein localises to the membrane. In terms of biological role, may cause loosening and extension of plant cell walls by disrupting non-covalent bonding between cellulose microfibrils and matrix glucans. No enzymatic activity has been found. May be required for rapid internodal elongation in deepwater rice during submergence. This chain is Expansin-B7 (EXPB7), found in Oryza sativa subsp. japonica (Rice).